The sequence spans 211 residues: Hypoxanthine-guanine phosphoribosyltransferase (211 aa).

Residues 1–20 (MSNSAKSPSGPVGDEGRRNY) are disordered. Residues lysine 66, 125-133 (EDIVDSAIT), lysine 157, and aspartate 185 contribute to the GMP site. The Proton acceptor role is filled by aspartate 129. Residue aspartate 185 participates in Mg(2+) binding.

The protein belongs to the purine/pyrimidine phosphoribosyltransferase family. It depends on Mg(2+) as a cofactor.

It is found in the cytoplasm. It catalyses the reaction IMP + diphosphate = hypoxanthine + 5-phospho-alpha-D-ribose 1-diphosphate. The catalysed reaction is GMP + diphosphate = guanine + 5-phospho-alpha-D-ribose 1-diphosphate. It participates in purine metabolism; IMP biosynthesis via salvage pathway; IMP from hypoxanthine: step 1/1. Converts guanine to guanosine monophosphate, and hypoxanthine to inosine monophosphate. Transfers the 5-phosphoribosyl group from 5-phosphoribosylpyrophosphate onto the purine. Plays a central role in the generation of purine nucleotides through the purine salvage pathway. The sequence is that of Hypoxanthine-guanine phosphoribosyltransferase from Leishmania donovani.